A 655-amino-acid polypeptide reads, in one-letter code: Serine/threonine-protein kinase SKM1 (655 aa).

In terms of domain architecture, PH spans 3–118 (GVKKEGWISY…WLDAIFAKCP (116 aa)). The region spanning 123-136 (VSSPTNFTHKVHVG) is the CRIB domain. Basic and acidic residues-rich tracts occupy residues 265–276 (EEGRVHVSKEST) and 318–327 (KNHDSKTKWH). A disordered region spans residues 265 to 327 (EEGRVHVSKE…KNHDSKTKWH (63 aa)). The region spanning 360 to 639 (FQLVEKAGQG…VRKLLTFEFL (280 aa)) is the Protein kinase domain. ATP-binding positions include 366 to 374 (AGQGASGAV) and lysine 406. Catalysis depends on aspartate 507, which acts as the Proton acceptor.

Belongs to the protein kinase superfamily. STE Ser/Thr protein kinase family. STE20 subfamily.

It carries out the reaction L-seryl-[protein] + ATP = O-phospho-L-seryl-[protein] + ADP + H(+). It catalyses the reaction L-threonyl-[protein] + ATP = O-phospho-L-threonyl-[protein] + ADP + H(+). Its function is as follows. May be involved in cellular signaling or cytoskeletal functions. May play a role in morphogenetic control. This Saccharomyces cerevisiae (strain ATCC 204508 / S288c) (Baker's yeast) protein is Serine/threonine-protein kinase SKM1 (SKM1).